The chain runs to 122 residues: MSISAGISINAFDIIKPEHFNGPLLFTASTLRVHSPWFSNTFKHTVSVNYLYVPAGRPRTFPLIKFHYEFIPKKVYRRASNSFHSVENCFEQILRICIVFLSLKIYTLTLVIIKVFIRRSDA.

Residues 93-113 traverse the membrane as a helical segment; sequence ILRICIVFLSLKIYTLTLVII.

Its subcellular location is the membrane. This is an uncharacterized protein from Saccharomyces cerevisiae (strain ATCC 204508 / S288c) (Baker's yeast).